Reading from the N-terminus, the 253-residue chain is Putative enoyl-CoA hydratase (253 aa).

E131 is a catalytic residue.

It belongs to the enoyl-CoA hydratase/isomerase family. In terms of assembly, homohexamer; dimer of trimers.

The enzyme catalyses a (3S)-3-hydroxyacyl-CoA = a (2E)-enoyl-CoA + H2O. This Thermus thermophilus (strain ATCC 27634 / DSM 579 / HB8) protein is Putative enoyl-CoA hydratase.